The primary structure comprises 161 residues: Phosphopantetheine adenylyltransferase (161 aa).

Thr-10 provides a ligand contact to substrate. Residues 10-11 (TF) and His-18 each bind ATP. Substrate-binding residues include Lys-42, Leu-74, and Arg-88. ATP is bound by residues 89 to 91 (GIR), Glu-99, and 124 to 130 (WRYLSST).

This sequence belongs to the bacterial CoaD family. As to quaternary structure, homohexamer. Requires Mg(2+) as cofactor.

It is found in the cytoplasm. The catalysed reaction is (R)-4'-phosphopantetheine + ATP + H(+) = 3'-dephospho-CoA + diphosphate. It functions in the pathway cofactor biosynthesis; coenzyme A biosynthesis; CoA from (R)-pantothenate: step 4/5. Reversibly transfers an adenylyl group from ATP to 4'-phosphopantetheine, yielding dephospho-CoA (dPCoA) and pyrophosphate. This is Phosphopantetheine adenylyltransferase from Haemophilus ducreyi (strain 35000HP / ATCC 700724).